Reading from the N-terminus, the 126-residue chain is Aspartate 1-decarboxylase (126 aa).

The Schiff-base intermediate with substrate; via pyruvic acid role is filled by serine 25. Serine 25 is modified (pyruvic acid (Ser)). Threonine 57 is a substrate binding site. Tyrosine 58 (proton donor) is an active-site residue. 73–75 (GGA) lines the substrate pocket.

Belongs to the PanD family. In terms of assembly, heterooctamer of four alpha and four beta subunits. It depends on pyruvate as a cofactor. Is synthesized initially as an inactive proenzyme, which is activated by self-cleavage at a specific serine bond to produce a beta-subunit with a hydroxyl group at its C-terminus and an alpha-subunit with a pyruvoyl group at its N-terminus.

Its subcellular location is the cytoplasm. The enzyme catalyses L-aspartate + H(+) = beta-alanine + CO2. It participates in cofactor biosynthesis; (R)-pantothenate biosynthesis; beta-alanine from L-aspartate: step 1/1. Functionally, catalyzes the pyruvoyl-dependent decarboxylation of aspartate to produce beta-alanine. The chain is Aspartate 1-decarboxylase from Acinetobacter baumannii (strain ACICU).